A 211-amino-acid polypeptide reads, in one-letter code: MNPQIQPQARYILPSFIEHSSFGIKESNPYNKLFEERIIFLGVQVDDASANDIMAQLLVLESLDPDRDITMYINSPGGGFTSLMAIYDTMQYVRADIQTVCLGQAASAAAVLLAAGTPGKRMALPNARVLIHQPSLQGVIQGQFSDLEIQAAEIERMRTLMETTLARHTGKDAATIRKDTDRDKILTAEEAKDYGIIDTVLEYRKLSAQTA.

Ser107 serves as the catalytic Nucleophile. The active site involves His132.

The protein belongs to the peptidase S14 family. In terms of assembly, fourteen ClpP subunits assemble into 2 heptameric rings which stack back to back to give a disk-like structure with a central cavity, resembling the structure of eukaryotic proteasomes.

The protein localises to the cytoplasm. It catalyses the reaction Hydrolysis of proteins to small peptides in the presence of ATP and magnesium. alpha-casein is the usual test substrate. In the absence of ATP, only oligopeptides shorter than five residues are hydrolyzed (such as succinyl-Leu-Tyr-|-NHMec, and Leu-Tyr-Leu-|-Tyr-Trp, in which cleavage of the -Tyr-|-Leu- and -Tyr-|-Trp bonds also occurs).. Cleaves peptides in various proteins in a process that requires ATP hydrolysis. Has a chymotrypsin-like activity. Plays a major role in the degradation of misfolded proteins. In Mycolicibacterium paratuberculosis (strain ATCC BAA-968 / K-10) (Mycobacterium paratuberculosis), this protein is ATP-dependent Clp protease proteolytic subunit 1.